A 295-amino-acid chain; its full sequence is Small ribosomal subunit biogenesis GTPase RsgA (295 aa).

The region spanning 68-228 is the CP-type G domain; it reads KNLLTKPHVA…VVDTPGFANL (161 aa). Residues 117–120 and 170–178 each bind GTP; these read NKMD and GLSGVGKSS. Positions 250, 255, 257, and 263 each coordinate Zn(2+).

It belongs to the TRAFAC class YlqF/YawG GTPase family. RsgA subfamily. In terms of assembly, monomer. Associates with 30S ribosomal subunit, binds 16S rRNA. Zn(2+) is required as a cofactor.

It is found in the cytoplasm. One of several proteins that assist in the late maturation steps of the functional core of the 30S ribosomal subunit. Helps release RbfA from mature subunits. May play a role in the assembly of ribosomal proteins into the subunit. Circularly permuted GTPase that catalyzes slow GTP hydrolysis, GTPase activity is stimulated by the 30S ribosomal subunit. The chain is Small ribosomal subunit biogenesis GTPase RsgA from Thermotoga maritima (strain ATCC 43589 / DSM 3109 / JCM 10099 / NBRC 100826 / MSB8).